A 547-amino-acid chain; its full sequence is MQNINPTQTFAWNALEQHKAENLTIPQLFNEDPKRFDKYSLRFEDQILVDFSKNAINQHTLALLRQLADECQVKSATYAMFNGEKINRTENRAVLHTALRNRSNTPVEVDGKNVMLEVNAVLAKMKGFCERVISGVSKGYTGKAITDVVNIGIGGSDLGPYMVTEALRPYKNHLTMHFVSNVDGTHIAETLAKINPETTLFLVASKTFTTQETMTNALSARQWLLDTAKDESAVAKHFVALSTNAKEVAKFGIDTENMFEFWDWVGGRYSLWSAIGLSIALSIGFEHFEQLLDGAHAMDKHFLNAPAEQNIPLTLALIGIWNNNFLGAESEAILPYDQYLHRFAAYFQQGNMESNGKYVGRDGKFVNYQTGPIIWGEPGTNGQHAFYQLIHQGTKLIPCDFIAPAQTHNPIGDHHPKLLSNFFAQTEALAFGKSKEVVEQEFLQAGTSLEEVVEIVPFKVFTGNKPTNSILVQKITPFTLGALIAMYEHKIFVQGVIFNIYSFDQWGVELGKQLANRILPELENNETITSHDSSTNGLINQFKLWKQ.

The active-site Proton donor is the Glu-353. Residues His-384 and Lys-512 contribute to the active site.

It belongs to the GPI family.

The protein resides in the cytoplasm. The enzyme catalyses alpha-D-glucose 6-phosphate = beta-D-fructose 6-phosphate. Its pathway is carbohydrate biosynthesis; gluconeogenesis. It participates in carbohydrate degradation; glycolysis; D-glyceraldehyde 3-phosphate and glycerone phosphate from D-glucose: step 2/4. Its function is as follows. Catalyzes the reversible isomerization of glucose-6-phosphate to fructose-6-phosphate. This chain is Glucose-6-phosphate isomerase, found in Glaesserella parasuis serovar 5 (strain SH0165) (Haemophilus parasuis).